The chain runs to 681 residues: Chaperone protein htpG (681 aa).

An a; substrate-binding region spans residues 1-326; sequence MQKGNIGVTT…SPDIPLNVSR (326 aa). The tract at residues 327–545 is b; it reads SYLQSDSNVK…YMRRMKEMAN (219 aa). Positions 546-681 are c; that stretch reads IQAGMSFYGE…NFVKRSIELI (136 aa).

The protein belongs to the heat shock protein 90 family. Homodimer.

It is found in the cytoplasm. In terms of biological role, molecular chaperone. Has ATPase activity. The protein is Chaperone protein htpG of Bacteroides fragilis (strain YCH46).